The chain runs to 108 residues: Iron-sulfur cluster assembly protein CyaY (108 aa).

Belongs to the frataxin family.

Functionally, involved in iron-sulfur (Fe-S) cluster assembly. May act as a regulator of Fe-S biogenesis. This Burkholderia mallei (strain NCTC 10247) protein is Iron-sulfur cluster assembly protein CyaY.